A 242-amino-acid polypeptide reads, in one-letter code: Arginine transport ATP-binding protein ArtP (242 aa).

Residues Ile-3–Ser-241 form the ABC transporter domain. Residue Gly-35–Ser-42 participates in ATP binding.

Belongs to the ABC transporter superfamily. The complex is composed of two ATP-binding proteins (ArtP), two transmembrane proteins (ArtM and ArtQ) and two solute-binding proteins (ArtJ and ArtI).

The protein resides in the cell inner membrane. It carries out the reaction a polar amino acid(out) + ATP + H2O = a polar amino acid(in) + ADP + phosphate + H(+). The enzyme catalyses L-arginine(out) + ATP + H2O = L-arginine(in) + ADP + phosphate + H(+). In terms of biological role, part of the ABC transporter complex ArtPIQMJ involved in arginine transport. Probably responsible for energy coupling to the transport system. In Escherichia coli O157:H7, this protein is Arginine transport ATP-binding protein ArtP (artP).